Consider the following 469-residue polypeptide: COP9 signalosome complex subunit 5 (469 aa).

The MPN domain occupies threonine 63 to asparagine 200. 3 residues coordinate Zn(2+): histidine 146, histidine 148, and aspartate 159. Positions histidine 146–aspartate 159 match the JAMM motif motif. Disordered regions lie at residues tyrosine 201 to lysine 220 and tyrosine 331 to methionine 404. Residues aspartate 344 to aspartate 353 are compositionally biased toward acidic residues.

It belongs to the peptidase M67A family. CSN5 subfamily. As to quaternary structure, component of the COP9 signalosome (CSN) complex.

The protein localises to the cytoplasm. It is found in the nucleus. In terms of biological role, catalytic Component of the COP9 signalosome (CSN) complex that acts as an regulator of the ubiquitin (Ubl) conjugation pathway by mediating the deneddylation of the cullin subunit of SCF-type E3 ubiquitin-protein ligase complexes. The CSN complex is involved in the regulation of the mating pheromone response. This chain is COP9 signalosome complex subunit 5 (RRI1), found in Debaryomyces hansenii (strain ATCC 36239 / CBS 767 / BCRC 21394 / JCM 1990 / NBRC 0083 / IGC 2968) (Yeast).